Consider the following 94-residue polypeptide: Large ribosomal subunit protein uL29 (94 aa).

The tract at residues 66–94 is disordered; that stretch reads NPGERKSRVLSRAKRKKKNLARLSAKVKG. Over residues 73–94 the composition is skewed to basic residues; sequence RVLSRAKRKKKNLARLSAKVKG.

It belongs to the universal ribosomal protein uL29 family.

This Leptospira borgpetersenii serovar Hardjo-bovis (strain JB197) protein is Large ribosomal subunit protein uL29.